Reading from the N-terminus, the 174-residue chain is Large ribosomal subunit protein uL6 (174 aa).

Belongs to the universal ribosomal protein uL6 family. Part of the 50S ribosomal subunit.

In terms of biological role, this protein binds to the 23S rRNA, and is important in its secondary structure. It is located near the subunit interface in the base of the L7/L12 stalk, and near the tRNA binding site of the peptidyltransferase center. This is Large ribosomal subunit protein uL6 from Stenotrophomonas maltophilia (strain R551-3).